Consider the following 476-residue polypeptide: Cysteine--tRNA ligase (476 aa).

Position 28 (C28) interacts with Zn(2+). The short motif at P30 to H40 is the 'HIGH' region element. Positions 208, 233, and 237 each coordinate Zn(2+). The 'KMSKS' region motif lies at K265–S269. An ATP-binding site is contributed by K268.

It belongs to the class-I aminoacyl-tRNA synthetase family. Zn(2+) serves as cofactor.

It is found in the cytoplasm. It catalyses the reaction tRNA(Cys) + L-cysteine + ATP = L-cysteinyl-tRNA(Cys) + AMP + diphosphate. The sequence is that of Cysteine--tRNA ligase from Methanococcus maripaludis (strain C6 / ATCC BAA-1332).